We begin with the raw amino-acid sequence, 530 residues long: Bifunctional purine biosynthesis protein PurH (530 aa).

An MGS-like domain is found at 1–148 (MNNARPIRRA…KNHKDVTIVV (148 aa)).

The protein belongs to the PurH family.

The enzyme catalyses (6R)-10-formyltetrahydrofolate + 5-amino-1-(5-phospho-beta-D-ribosyl)imidazole-4-carboxamide = 5-formamido-1-(5-phospho-D-ribosyl)imidazole-4-carboxamide + (6S)-5,6,7,8-tetrahydrofolate. It catalyses the reaction IMP + H2O = 5-formamido-1-(5-phospho-D-ribosyl)imidazole-4-carboxamide. It functions in the pathway purine metabolism; IMP biosynthesis via de novo pathway; 5-formamido-1-(5-phospho-D-ribosyl)imidazole-4-carboxamide from 5-amino-1-(5-phospho-D-ribosyl)imidazole-4-carboxamide (10-formyl THF route): step 1/1. Its pathway is purine metabolism; IMP biosynthesis via de novo pathway; IMP from 5-formamido-1-(5-phospho-D-ribosyl)imidazole-4-carboxamide: step 1/1. This chain is Bifunctional purine biosynthesis protein PurH, found in Aliivibrio fischeri (strain MJ11) (Vibrio fischeri).